A 377-amino-acid chain; its full sequence is DnaJ-related protein SCJ1 (377 aa).

Residues 1–21 form the signal peptide; the sequence is MIPKLYIHLILSLLLLPLILA. A J domain is found at 23–88; the sequence is DYYAILEIDK…EKKKIYDQFG (66 aa). The CR-type zinc finger occupies 156-237; the sequence is GSSIEFTLNL…CHGKKVTKKN (82 aa). 4 CXXCXGXG motif repeats span residues 169–176, 185–192, 211–218, and 225–232; these read CDACHGSG, CPDCQGRG, CGRCGGTG, and CKTCHGKK. The short motif at 288 to 290 is the Cell attachment site element; sequence RGD. The Prevents secretion from ER signature appears at 374–377; sequence KDEL.

It localises to the endoplasmic reticulum lumen. Its function is as follows. Regulates protein folding in the endoplasmic reticulum lumen. Probably acts as a J-protein for the Hsp70-type chaperone KAR2 by stimulating its ATP-dependent reaction cycle and initiating folding reactions. Also involved in the endoplasmic reticulum-associated degradation (ERAD) process. Cooperates with KAR2 and another J-protein JEM1 to facilitate the export of ERAD substrates to the cytoplasm by maintaining them in a translocation-competent state and preventing their aggregation in the endoplasmic reticulum lumen. In Saccharomyces cerevisiae (strain ATCC 204508 / S288c) (Baker's yeast), this protein is DnaJ-related protein SCJ1 (SCJ1).